Consider the following 115-residue polypeptide: Ig heavy chain V-III region W3082 (115 aa).

Positions 1–114 constitute an Ig-like domain; sequence EVKLEESGGG…WGQGTLVTVS (114 aa). The cysteines at positions 22 and 98 are disulfide-linked.

The sequence is that of Ig heavy chain V-III region W3082 from Mus musculus (Mouse).